The chain runs to 102 residues: MNNVFEIINQARRKNKLKRELQDNQKKIRDNQKRVTLLENMLDYIHPTMTTAEVIAVVENMKADYEDRVDDHIIKSAEISKSRRDISRKIRELTEADKKANK.

Residues 7-34 (IINQARRKNKLKRELQDNQKKIRDNQKR) adopt a coiled-coil conformation.

This sequence belongs to the pole-localizer TmaR family.

Its subcellular location is the cytoplasm. Its function is as follows. Pole-localizer protein involved in the regulation of several cellular processes. The sequence is that of Pole-localizer protein TmaR from Aliivibrio fischeri (strain ATCC 700601 / ES114) (Vibrio fischeri).